The primary structure comprises 452 residues: Eukaryotic translation initiation factor 4B3 (452 aa).

Residue Ala-2 is modified to N-acetylalanine. The tract at residues 20-282 (EEHEAELKQQ…PSGGSRPRLV (263 aa)) is disordered. Residues 28–37 (QQPSPTNQKS) show a composition bias toward polar residues. Positions 98–110 (PRERSAEELDRSK) are enriched in basic and acidic residues. The span at 111–122 (LGGGFRSYGGGR) shows a compositional bias: gly residues. The segment covering 126 to 136 (ESSSSRWGSSR) has biased composition (low complexity). Positions 137–156 (VSEDGERRGGGFNRDREPSR) are enriched in basic and acidic residues. 2 consecutive short sequence motifs (nuclear localization signal) follow at residues 172–179 (AKKPISGN) and 215–222 (PRRFVSSN). Over residues 227 to 243 (DRFEKRGSFESLSRNRD) the composition is skewed to basic and acidic residues. Residues Ser-234, Ser-270, and Ser-300 each carry the phosphoserine modification. Over residues 265–280 (GAANGSPPPSGGSRPR) the composition is skewed to low complexity. Residues 349-452 (AAMEKPNEKS…AKKEETEDKI (104 aa)) are disordered. Basic and acidic residues predominate over residues 369–386 (GRKDEERIERSWRKSTEH). Acidic residues predominate over residues 387–397 (SEEDAQEEEPA). Basic and acidic residues-rich tracts occupy residues 400 to 419 (GAKK…KKEE) and 441 to 452 (EEAKKEETEDKI).

It belongs to the eIF-4 subunit B family. Homodimer. Nonspherical monomer. mRNA-discriminating component of initiation complexes. Interacts with MAD2. Phosphorylated.

It is found in the nucleus. Functionally, promotes the eIF4F and eIF4A RNA-dependent ATP-hydrolysis activity with different efficiency depending on mRNAs, thus providing mRNA discrimination during initiation of translation. This is Eukaryotic translation initiation factor 4B3 from Arabidopsis thaliana (Mouse-ear cress).